The following is a 219-amino-acid chain: Virginiamycin A acetyltransferase (219 aa).

H87 is an active-site residue.

This sequence belongs to the transferase hexapeptide repeat family.

Its function is as follows. Inactivates the A compounds of virginiamycin-like antibiotics, thus providing resistance to these antibiotics. The polypeptide is Virginiamycin A acetyltransferase (vat) (Staphylococcus aureus).